Here is a 263-residue protein sequence, read N- to C-terminus: Aquaporin Lacbi1:247946 (263 aa).

At 1-18 the chain is on the cytoplasmic side; the sequence is MKLTISHHKCAIRKVMAE. A helical membrane pass occupies residues 19–39; sequence FVGVALLVIFGAGTACQVVLS. Residues 40–45 are Extracellular-facing; it reads TNPSSF. Residues 46–66 traverse the membrane as a helical segment; sequence LSINFGWAIGIATGAWVSAGI. Residues 67-89 are Cytoplasmic-facing; it reads SGGHINPAITIAMATYRGFPWRE. Residues 72–74 carry the NPA 1 motif; that stretch reads NPA. A helical membrane pass occupies residues 90 to 110; sequence VPGYIFAQALGGFVGAALVYA. Topologically, residues 111-143 are extracellular; it reads NYFHAIDIFEGGHIRTQATASLFATFALPYMTQ. The helical transmembrane segment at 144–164 threads the bilayer; that stretch reads ASCFFSEFLATAVLFIVFLAL. Residues 165–169 are Cytoplasmic-facing; it reads NDKHN. A helical transmembrane segment spans residues 170–190; sequence GALTNGLLPFALFILFIGLGA. Residues 191–227 lie on the Extracellular side of the membrane; it reads SLGMQTGYAVNPARDFGPRLFLAMAGYGKAVFNYRRQ. An NPA 2 motif is present at residues 201–203; that stretch reads NPA. A helical transmembrane segment spans residues 228–248; sequence YWIWAPIIAPILGAQAGGLLY. At 249–263 the chain is on the cytoplasmic side; that stretch reads DTSIYNGDDSPIKWR.

The protein belongs to the MIP/aquaporin (TC 1.A.8) family.

Its subcellular location is the membrane. The enzyme catalyses H2O(in) = H2O(out). In terms of biological role, water channel required to facilitate the transport of water across membranes. Shows low but significant water conductivity, but no glycerol nor ammonium transport activities. The protein is Aquaporin Lacbi1:247946 of Laccaria bicolor (strain S238N-H82 / ATCC MYA-4686) (Bicoloured deceiver).